The primary structure comprises 178 residues: Cytidylate kinase (178 aa).

An ATP-binding site is contributed by 7-15 (GLPGSGTTS).

The protein belongs to the cytidylate kinase family. Type 2 subfamily.

The protein resides in the cytoplasm. It carries out the reaction CMP + ATP = CDP + ADP. The enzyme catalyses dCMP + ATP = dCDP + ADP. This Methanospirillum hungatei JF-1 (strain ATCC 27890 / DSM 864 / NBRC 100397 / JF-1) protein is Cytidylate kinase.